The chain runs to 241 residues: Large ribosomal subunit protein uL1 (241 aa).

The protein belongs to the universal ribosomal protein uL1 family. As to quaternary structure, part of the 50S ribosomal subunit.

Functionally, binds directly to 23S rRNA. The L1 stalk is quite mobile in the ribosome, and is involved in E site tRNA release. Protein L1 is also a translational repressor protein, it controls the translation of the L11 operon by binding to its mRNA. The polypeptide is Large ribosomal subunit protein uL1 (Streptomyces coelicolor (strain ATCC BAA-471 / A3(2) / M145)).